The sequence spans 480 residues: uncharacterized protein (480 aa).

The residue at position 222 (lysine 222) is an N6-(pyridoxal phosphate)lysine.

It belongs to the Orn/Lys/Arg decarboxylase class-I family. It depends on pyridoxal 5'-phosphate as a cofactor.

This is an uncharacterized protein from Bacillus subtilis (strain 168).